A 126-amino-acid chain; its full sequence is Ribonuclease P protein component (126 aa).

Belongs to the RnpA family. Consists of a catalytic RNA component (M1 or rnpB) and a protein subunit.

It carries out the reaction Endonucleolytic cleavage of RNA, removing 5'-extranucleotides from tRNA precursor.. Functionally, RNaseP catalyzes the removal of the 5'-leader sequence from pre-tRNA to produce the mature 5'-terminus. It can also cleave other RNA substrates such as 4.5S RNA. The protein component plays an auxiliary but essential role in vivo by binding to the 5'-leader sequence and broadening the substrate specificity of the ribozyme. The sequence is that of Ribonuclease P protein component from Rhodococcus erythropolis (strain PR4 / NBRC 100887).